Here is a 331-residue protein sequence, read N- to C-terminus: Ribose-phosphate pyrophosphokinase (331 aa).

ATP is bound at residue 55-57 (DGE). Histidine 148 and aspartate 187 together coordinate Mg(2+). Lysine 211 is an active-site residue. D-ribose 5-phosphate-binding positions include arginine 213, aspartate 237, and 241–245 (DTGGT).

It belongs to the ribose-phosphate pyrophosphokinase family. Class I subfamily. In terms of assembly, homohexamer. Mg(2+) is required as a cofactor.

The protein resides in the cytoplasm. The catalysed reaction is D-ribose 5-phosphate + ATP = 5-phospho-alpha-D-ribose 1-diphosphate + AMP + H(+). Its pathway is metabolic intermediate biosynthesis; 5-phospho-alpha-D-ribose 1-diphosphate biosynthesis; 5-phospho-alpha-D-ribose 1-diphosphate from D-ribose 5-phosphate (route I): step 1/1. In terms of biological role, involved in the biosynthesis of the central metabolite phospho-alpha-D-ribosyl-1-pyrophosphate (PRPP) via the transfer of pyrophosphoryl group from ATP to 1-hydroxyl of ribose-5-phosphate (Rib-5-P). This Prochlorococcus marinus subsp. pastoris (strain CCMP1986 / NIES-2087 / MED4) protein is Ribose-phosphate pyrophosphokinase.